The sequence spans 952 residues: Meiotic coiled-coil protein 3 (952 aa).

Coiled-coil stretches lie at residues 283–611, 684–716, and 839–942; these read QLLQ…KEHL, TKKF…EDKL, and SLEN…RERE.

It is found in the cytoplasm. In terms of biological role, has a role in meiosis. The chain is Meiotic coiled-coil protein 3 (mcp3) from Schizosaccharomyces pombe (strain 972 / ATCC 24843) (Fission yeast).